We begin with the raw amino-acid sequence, 535 residues long: EH domain-containing protein 3 (535 aa).

Residue M1 is modified to N-acetylmethionine. In terms of domain architecture, Dynamin-type G spans 55 to 286; it reads FDNKPMVLLV…DLFKDIQSLP (232 aa). Residues 65–72 form a G1 motif region; the sequence is GQYSTGKT. 65–72 lines the ATP pocket; that stretch reads GQYSTGKT. Positions 91–92 are G2 motif; the sequence is EP. Positions 153–156 are G3 motif; the sequence is DTPG. A coiled-coil region spans residues 198–227; it reads DEFSEVIKALKNHEDKMRVVLNKADQIETQ. The interval 219–222 is G4 motif; the sequence is NKAD. K220 contacts ATP. Residue I243 is a region of interest, G5 motif. W258 serves as a coordination point for ATP. Residue K315 forms a Glycyl lysine isopeptide (Lys-Gly) (interchain with G-Cter in SUMO) linkage. A phosphoserine mark is found at S349 and S456. Residues 444–532 enclose the EH domain; it reads DKPMYDEIFY…AHLLPPSKRK (89 aa). An EF-hand domain is found at 476–511; it reads LPNSVLGKIWKLADIDKDGMLDDEEFALANHLIKVK. D489, D491, D493, M495, and E500 together coordinate Ca(2+). K511 participates in a covalent cross-link: Glycyl lysine isopeptide (Lys-Gly) (interchain with G-Cter in SUMO).

The protein belongs to the TRAFAC class dynamin-like GTPase superfamily. Dynamin/Fzo/YdjA family. EHD subfamily. Homooligomer, and heterooligomer with EHD1, EHD2 and EHD4, ATP-binding is required for heterooligomerization. Interacts with PACSIN1. Interacts with PACSIN2. Interacts (via EH domain) with MICALL1. Interacts (via EH domain) with RAB11FIP2. Interacts with ANK2. Interacts with CACNA1GG and CACNA1H.

Its subcellular location is the recycling endosome membrane. The protein localises to the cell membrane. It is found in the cell projection. The protein resides in the cilium membrane. Functionally, ATP- and membrane-binding protein that controls membrane reorganization/tubulation upon ATP hydrolysis. In vitro causes tubulation of endocytic membranes. Binding to phosphatidic acid induces its membrane tubulation activity. Plays a role in endocytic transport. Involved in early endosome to recycling endosome compartment (ERC), retrograde early endosome to Golgi, and endosome to plasma membrane (rapid recycling) protein transport. Involved in the regulation of Golgi maintenance and morphology. Involved in the recycling of internalized D1 dopamine receptor. Plays a role in cardiac protein trafficking probably implicating ANK2. Involved in the ventricular membrane targeting of SLC8A1 and CACNA1C and probably the atrial membrane localization of CACNA1GG and CACNA1H implicated in the regulation of atrial myocyte excitability and cardiac conduction. In conjunction with EHD4 may be involved in endocytic trafficking of KDR/VEGFR2 implicated in control of glomerular function. Involved in the rapid recycling of integrin beta-3 implicated in cell adhesion maintenance. Involved in the unidirectional retrograde dendritic transport of endocytosed BACE1 and in efficient sorting of BACE1 to axons implicating a function in neuronal APP processing. Plays a role in the formation of the ciliary vesicle, an early step in cilium biogenesis; possibly sharing redundant functions with Ehd1. This Rattus norvegicus (Rat) protein is EH domain-containing protein 3.